A 516-amino-acid polypeptide reads, in one-letter code: Potassium voltage-gated channel subfamily A member 10 (516 aa).

A helical transmembrane segment spans residues 223 to 244 (VALVSVLVIVISIIIFCMETLP). N261 carries an N-linked (GlcNAc...) asparagine glycan. A helical membrane pass occupies residues 276–296 (FFVIETACIIWFSFELFVRFI). A helical transmembrane segment spans residues 308–328 (IMNIIDIVSIIPYFVTLTTEL). The N-linked (GlcNAc...) asparagine glycan is linked to N339. A helical; Voltage-sensor transmembrane segment spans residues 344-363 (ILRIIRLVRVFRIFKLSRHS). The chain crosses the membrane as a helical span at residues 380 to 400 (LGLLIFFLFIGVILFSSAVYF). The short motif at 426-431 (TVGYGD) is the Selectivity filter element. The chain crosses the membrane as a helical span at residues 441-461 (IVGTLCAIAGVLTIALPVPVI). N503 is a glycosylation site (N-linked (GlcNAc...) asparagine).

The protein belongs to the potassium channel family. A (Shaker) (TC 1.A.1.2) subfamily. Kv1.8/KCNA10 sub-subfamily. In terms of assembly, homotetramer. As to expression, detected in brain, cochlear sensory epithelium, cochlear ganglion, tegumentum vasculosum. Detected at low levels in cochlear lagena.

Its subcellular location is the membrane. The enzyme catalyses K(+)(in) = K(+)(out). With respect to regulation, the channel activity is up-regulated by cAMP. Its function is as follows. Voltage-gated potassium ion channel that mediates K(+) permeability of excitable membranes. When opened in response to the voltage difference across the membrane, KCNA10 channel selectively allows the flow of potassium ions across the membrane down their electrochemical gradient. The chain is Potassium voltage-gated channel subfamily A member 10 (KCNA10) from Gallus gallus (Chicken).